The following is a 158-amino-acid chain: Cysteine-rich venom protein VAR7 (158 aa).

An N-terminal signal peptide occupies residues 1 to 22 (MILLKLYLTLAAILCQSRGTTS). Positions 41–158 (NKHNDLRRTV…MGCAINLCPN (118 aa)) constitute an SCP domain. Residues C77 and C156 are joined by a disulfide bond.

The protein belongs to the CRISP family. Post-translationally, contains 8 disulfide bonds. As to expression, expressed by the venom gland.

The protein localises to the secreted. In terms of biological role, blocks ryanodine receptors, and potassium channels. The polypeptide is Cysteine-rich venom protein VAR7 (Varanus acanthurus (Ridge-tailed monitor)).